A 272-amino-acid polypeptide reads, in one-letter code: 2-succinyl-6-hydroxy-2,4-cyclohexadiene-1-carboxylate synthase (272 aa).

The protein belongs to the AB hydrolase superfamily. MenH family. Monomer.

The catalysed reaction is 5-enolpyruvoyl-6-hydroxy-2-succinyl-cyclohex-3-ene-1-carboxylate = (1R,6R)-6-hydroxy-2-succinyl-cyclohexa-2,4-diene-1-carboxylate + pyruvate. The protein operates within quinol/quinone metabolism; 1,4-dihydroxy-2-naphthoate biosynthesis; 1,4-dihydroxy-2-naphthoate from chorismate: step 3/7. It participates in quinol/quinone metabolism; menaquinone biosynthesis. Its function is as follows. Catalyzes a proton abstraction reaction that results in 2,5-elimination of pyruvate from 2-succinyl-5-enolpyruvyl-6-hydroxy-3-cyclohexene-1-carboxylate (SEPHCHC) and the formation of 2-succinyl-6-hydroxy-2,4-cyclohexadiene-1-carboxylate (SHCHC). This chain is 2-succinyl-6-hydroxy-2,4-cyclohexadiene-1-carboxylate synthase, found in Yersinia pseudotuberculosis serotype I (strain IP32953).